Reading from the N-terminus, the 283-residue chain is Pantothenate synthetase (283 aa).

30-37 (MGCLHEGH) lines the ATP pocket. His-37 serves as the catalytic Proton donor. (R)-pantoate is bound at residue Gln-61. Residue Gln-61 coordinates beta-alanine. Residue 147–150 (GQKD) participates in ATP binding. A (R)-pantoate-binding site is contributed by Gln-153. Residues Val-176 and 184-187 (KSSR) contribute to the ATP site.

Belongs to the pantothenate synthetase family. In terms of assembly, homodimer.

The protein localises to the cytoplasm. The catalysed reaction is (R)-pantoate + beta-alanine + ATP = (R)-pantothenate + AMP + diphosphate + H(+). Its pathway is cofactor biosynthesis; (R)-pantothenate biosynthesis; (R)-pantothenate from (R)-pantoate and beta-alanine: step 1/1. Its function is as follows. Catalyzes the condensation of pantoate with beta-alanine in an ATP-dependent reaction via a pantoyl-adenylate intermediate. The polypeptide is Pantothenate synthetase (Clostridium novyi (strain NT)).